A 297-amino-acid chain; its full sequence is Urease accessory protein UreD (297 aa).

This sequence belongs to the UreD family. UreD, UreF and UreG form a complex that acts as a GTP-hydrolysis-dependent molecular chaperone, activating the urease apoprotein by helping to assemble the nickel containing metallocenter of UreC. The UreE protein probably delivers the nickel.

The protein localises to the cytoplasm. Functionally, required for maturation of urease via the functional incorporation of the urease nickel metallocenter. The polypeptide is Urease accessory protein UreD (Anaeromyxobacter sp. (strain Fw109-5)).